Here is a 476-residue protein sequence, read N- to C-terminus: Acidic leucine-rich nuclear phosphoprotein 32-related protein 1 (476 aa).

3 LRR repeats span residues 51–72 (SLEH…PRLR), 73–92 (NLTR…DHLV), and 98–119 (SLRD…SPLA). The 39-residue stretch at 131–169 (CPVTRVKDYRSKVFGMIRTLKYLDKMDADENERPESDDD) folds into the LRRCT domain. The disordered stretch occupies residues 157–476 (DADENERPES…VEDLRPFKHH (320 aa)). 8 stretches are compositionally biased toward acidic residues: residues 165–194 (ESDD…EDPG), 222–232 (DVDEDESDADE), 252–289 (GDED…EDAV), 299–329 (SDEE…EAEP), 353–371 (EGED…EERL), 379–396 (EGND…EDTE), 415–436 (DAAE…DDGG), and 458–467 (GDDDEDDDGV).

This sequence belongs to the ANP32 family.

This Oryza sativa subsp. japonica (Rice) protein is Acidic leucine-rich nuclear phosphoprotein 32-related protein 1.